The chain runs to 247 residues: NAD(P)H-quinone oxidoreductase subunit K (247 aa).

[4Fe-4S] cluster-binding residues include C63, C64, C128, and C159.

The protein belongs to the complex I 20 kDa subunit family. As to quaternary structure, NDH-1 can be composed of about 15 different subunits; different subcomplexes with different compositions have been identified which probably have different functions. The cofactor is [4Fe-4S] cluster.

The protein localises to the cellular thylakoid membrane. It carries out the reaction a plastoquinone + NADH + (n+1) H(+)(in) = a plastoquinol + NAD(+) + n H(+)(out). The catalysed reaction is a plastoquinone + NADPH + (n+1) H(+)(in) = a plastoquinol + NADP(+) + n H(+)(out). Functionally, NDH-1 shuttles electrons from an unknown electron donor, via FMN and iron-sulfur (Fe-S) centers, to quinones in the respiratory and/or the photosynthetic chain. The immediate electron acceptor for the enzyme in this species is believed to be plastoquinone. Couples the redox reaction to proton translocation, and thus conserves the redox energy in a proton gradient. Cyanobacterial NDH-1 also plays a role in inorganic carbon-concentration. This Gloeothece citriformis (strain PCC 7424) (Cyanothece sp. (strain PCC 7424)) protein is NAD(P)H-quinone oxidoreductase subunit K.